The sequence spans 184 residues: Photosystem I assembly protein Ycf4 (184 aa).

Transmembrane regions (helical) follow at residues 22-42 (FCWA…GISS) and 64-84 (IVMS…WSTI).

It belongs to the Ycf4 family.

Its subcellular location is the plastid. The protein localises to the chloroplast thylakoid membrane. Functionally, seems to be required for the assembly of the photosystem I complex. This Piper cenocladum (Ant piper) protein is Photosystem I assembly protein Ycf4.